A 392-amino-acid chain; its full sequence is Large ribosomal subunit protein uL3 (392 aa).

The protein belongs to the universal ribosomal protein uL3 family.

The protein localises to the cytoplasm. The L3 protein is a component of the large subunit of cytoplasmic ribosomes. In Aspergillus fumigatus (strain ATCC MYA-4609 / CBS 101355 / FGSC A1100 / Af293) (Neosartorya fumigata), this protein is Large ribosomal subunit protein uL3 (rpl3).